The following is a 130-amino-acid chain: Mitochondrial pyruvate carrier 1 (130 aa).

The next 2 helical transmembrane spans lie at 23-45 and 55-77; these read LKYI…IAAI and ISGP…ALSV.

Belongs to the mitochondrial pyruvate carrier (MPC) (TC 2.A.105) family. The functional 150 kDa pyruvate import complex is a heteromer of MPC1 and either MPC2 or MPC3.

Its subcellular location is the mitochondrion. The protein resides in the mitochondrion inner membrane. In terms of biological role, mediates the uptake of pyruvate into mitochondria. The protein is Mitochondrial pyruvate carrier 1 of Saccharomyces cerevisiae (strain ATCC 204508 / S288c) (Baker's yeast).